The primary structure comprises 247 residues: Ribonuclease PH (247 aa).

Phosphate is bound by residues Arg-87 and 125 to 127 (GTR).

The protein belongs to the RNase PH family. Homohexameric ring arranged as a trimer of dimers.

It catalyses the reaction tRNA(n+1) + phosphate = tRNA(n) + a ribonucleoside 5'-diphosphate. Functionally, phosphorolytic 3'-5' exoribonuclease that plays an important role in tRNA 3'-end maturation. Removes nucleotide residues following the 3'-CCA terminus of tRNAs; can also add nucleotides to the ends of RNA molecules by using nucleoside diphosphates as substrates, but this may not be physiologically important. Probably plays a role in initiation of 16S rRNA degradation (leading to ribosome degradation) during starvation. This chain is Ribonuclease PH, found in Nostoc sp. (strain PCC 7120 / SAG 25.82 / UTEX 2576).